The following is a 164-amino-acid chain: MKSVITTVVSAADAAGRFPSNSDLESIQGNIQRSAARLEAAEKLAGNHEAVVKEAGDACFAKYAYLKNPGEAGENQEKINKCYRDVDHYMRLVNYDLVVGGTGPLDEWGIAGAREVYRTLNLPTSAYVASIAYTRDRLCVPRDMSAQAGVEFSAYLDYLINALS.

Residues Cys82 and Cys139 each coordinate (2R,3E)-phycoerythrobilin.

The protein belongs to the phycobiliprotein family. Heteromer of 6 alpha, 6 beta and one gamma chain. Contains two covalently linked bilin chromophores.

It localises to the plastid. It is found in the chloroplast thylakoid membrane. Its function is as follows. Light-harvesting photosynthetic bile pigment-protein from the phycobiliprotein complex. The chain is B-phycoerythrin alpha chain (cpeA) from Porphyridium purpureum (Red alga).